The following is a 253-amino-acid chain: MLKLARPFIPPLSRNNAISSGIVLTSRRFQSSFTFLSNQSLLSKNQMKSKRKKGSKKAAYHRQPPEHEHTAPLIKQNKTITKKEHSDVRGSHLKKKRSDFSWLPRVPSTSHLKQSDMTTNVLYSGYRPLFINPNDPKLKEDTGSTLYEFAMKLEDLNEPLSPWISSATGLEFFSEWENIPSELLKNLKPFHPPKEKSMNTNELIHVSAKRNTLVDNKTSETLQRKMDEFSKRRGKGRKKSVVTLLQMKKKLEG.

The transit peptide at 1–36 directs the protein to the mitochondrion; the sequence is MLKLARPFIPPLSRNNAISSGIVLTSRRFQSSFTFL. The segment at 44–93 is disordered; sequence KNQMKSKRKKGSKKAAYHRQPPEHEHTAPLIKQNKTITKKEHSDVRGSHL. The segment covering 47–60 has biased composition (basic residues); it reads MKSKRKKGSKKAAY. The span at 81-90 shows a compositional bias: basic and acidic residues; that stretch reads TKKEHSDVRG.

Its subcellular location is the mitochondrion. Required for respiratory growth, stability of the mitochondrial genome and for proper assembly or maintenance of mitochondrial proteins. The chain is Protein PET20, mitochondrial (PET20) from Saccharomyces cerevisiae (strain ATCC 204508 / S288c) (Baker's yeast).